The sequence spans 334 residues: Holliday junction branch migration complex subunit RuvB (334 aa).

The interval A4–Y184 is large ATPase domain (RuvB-L). ATP contacts are provided by residues R24, G65, K68, T69, T70, E131–Y133, R174, Y184, and R221. T69 is a binding site for Mg(2+). Positions N185–D255 are small ATPAse domain (RuvB-S). The tract at residues S258–D334 is head domain (RuvB-H). Residues R294, R313, and R318 each contribute to the DNA site.

Belongs to the RuvB family. Homohexamer. Forms an RuvA(8)-RuvB(12)-Holliday junction (HJ) complex. HJ DNA is sandwiched between 2 RuvA tetramers; dsDNA enters through RuvA and exits via RuvB. An RuvB hexamer assembles on each DNA strand where it exits the tetramer. Each RuvB hexamer is contacted by two RuvA subunits (via domain III) on 2 adjacent RuvB subunits; this complex drives branch migration. In the full resolvosome a probable DNA-RuvA(4)-RuvB(12)-RuvC(2) complex forms which resolves the HJ.

It localises to the cytoplasm. It catalyses the reaction ATP + H2O = ADP + phosphate + H(+). Its function is as follows. The RuvA-RuvB-RuvC complex processes Holliday junction (HJ) DNA during genetic recombination and DNA repair, while the RuvA-RuvB complex plays an important role in the rescue of blocked DNA replication forks via replication fork reversal (RFR). RuvA specifically binds to HJ cruciform DNA, conferring on it an open structure. The RuvB hexamer acts as an ATP-dependent pump, pulling dsDNA into and through the RuvAB complex. RuvB forms 2 homohexamers on either side of HJ DNA bound by 1 or 2 RuvA tetramers; 4 subunits per hexamer contact DNA at a time. Coordinated motions by a converter formed by DNA-disengaged RuvB subunits stimulates ATP hydrolysis and nucleotide exchange. Immobilization of the converter enables RuvB to convert the ATP-contained energy into a lever motion, pulling 2 nucleotides of DNA out of the RuvA tetramer per ATP hydrolyzed, thus driving DNA branch migration. The RuvB motors rotate together with the DNA substrate, which together with the progressing nucleotide cycle form the mechanistic basis for DNA recombination by continuous HJ branch migration. Branch migration allows RuvC to scan DNA until it finds its consensus sequence, where it cleaves and resolves cruciform DNA. The protein is Holliday junction branch migration complex subunit RuvB of Shewanella amazonensis (strain ATCC BAA-1098 / SB2B).